A 399-amino-acid polypeptide reads, in one-letter code: Rhodopsin, G0-coupled (399 aa).

Over 1–17 the chain is Extracellular; sequence MPFPLNRTDTALVISPS. The N-linked (GlcNAc...) asparagine glycan is linked to N6. Residues 18 to 43 traverse the membrane as a helical segment; that stretch reads EFRIIGIFISICCIIGVLGNLLIIIV. Topologically, residues 44 to 55 are cytoplasmic; sequence FAKRRSVRRPIN. The chain crosses the membrane as a helical span at residues 56–81; it reads FFVLNLAVSDLIVALLGYPMTAASAF. The Extracellular segment spans residues 82 to 95; sequence SNRWIFDNIGCKIY. Residues C92 and C169 are joined by a disulfide bond. A helical membrane pass occupies residues 96–115; the sequence is AFLCFNSGVISIMTHAALSF. Residues 116–134 lie on the Cytoplasmic side of the membrane; it reads CRYIIICQYGYRKKITQTT. A helical transmembrane segment spans residues 135–158; it reads VLRTLFSIWSFAMFWTLSPLFGWS. At 159-182 the chain is on the extracellular side; sequence SYVIEVVPVSCSVNWYGHGLGDVS. The chain crosses the membrane as a helical span at residues 183-210; that stretch reads YTISVIVAVYVFPLSIIVFSYGMILQEK. At 211 to 240 the chain is on the cytoplasmic side; that stretch reads VCKDSRKNGIRAQQRYTPRFIQDIEQRVTF. Residues 241–263 form a helical membrane-spanning segment; it reads ISFLMMAAFMVAWTPYAIMSALA. Residues 264 to 271 are Extracellular-facing; it reads IGSFNVEN. The chain crosses the membrane as a helical span at residues 272 to 295; sequence SFAALPTLFAKASCAYNPFIYAFT. An N6-(retinylidene)lysine modification is found at K282. Residues 296 to 399 are Cytoplasmic-facing; that stretch reads NANFRDTVVE…NTFTADFSVI (104 aa).

This sequence belongs to the G-protein coupled receptor 1 family. Opsin subfamily. Post-translationally, phosphorylated on some or all of the serine and threonine residues present in the C-terminal region. As to expression, retina. Expressed in the hyperpolarizing cell layer of the photoreceptor cells with its photoreceptive region adjacent to the lens.

It localises to the membrane. In terms of biological role, visual pigments are the light-absorbing molecules that mediate vision. They consist of an apoprotein, opsin, covalently linked to cis-retinal. In Mizuhopecten yessoensis (Japanese scallop), this protein is Rhodopsin, G0-coupled (SCOP2).